The following is a 167-amino-acid chain: Phosphopantetheine adenylyltransferase (167 aa).

Position 10 (Ser-10) interacts with substrate. ATP-binding positions include Ser-10 to Phe-11 and His-18. Positions 42, 79, and 93 each coordinate substrate. ATP contacts are provided by residues Gly-94 to Arg-96, Glu-104, and Val-129 to Thr-135.

Belongs to the bacterial CoaD family. Homohexamer. Mg(2+) serves as cofactor.

It localises to the cytoplasm. It carries out the reaction (R)-4'-phosphopantetheine + ATP + H(+) = 3'-dephospho-CoA + diphosphate. The protein operates within cofactor biosynthesis; coenzyme A biosynthesis; CoA from (R)-pantothenate: step 4/5. In terms of biological role, reversibly transfers an adenylyl group from ATP to 4'-phosphopantetheine, yielding dephospho-CoA (dPCoA) and pyrophosphate. This is Phosphopantetheine adenylyltransferase from Beijerinckia indica subsp. indica (strain ATCC 9039 / DSM 1715 / NCIMB 8712).